The primary structure comprises 102 residues: Acid shock protein (102 aa).

Residues 1–21 form the signal peptide; that stretch reads MKKVLALVVAAAMGLSSAAFA. Residues 22-41 show a composition bias toward low complexity; the sequence is AETATTPAPTATTTKAAPAK. The propeptide occupies 22 to 58; it reads AETATTPAPTATTTKAAPAKTTHHKKQHKAAPAQKAQ. The interval 22-102 is disordered; the sequence is AETATTPAPT…PAKPAAQPAA (81 aa). The span at 80–90 shows a compositional bias: basic residues; sequence AAKKHAGKHGH. Low complexity predominate over residues 91–102; that stretch reads QQPAKPAAQPAA.

It belongs to the Asr family. Proteolytic processing gives rise to the active protein.

The protein resides in the periplasm. Required for growth and/or survival at acidic conditions. In Shigella flexneri, this protein is Acid shock protein.